The chain runs to 334 residues: DNA-directed RNA polymerase subunit alpha (334 aa).

Residues 1–233 (MADQTISNVL…NLFTPLVSQE (233 aa)) are alpha N-terminal domain (alpha-NTD). The tract at residues 263–334 (DNENSYNLYN…QLKKRFKIQL (72 aa)) is alpha C-terminal domain (alpha-CTD).

This sequence belongs to the RNA polymerase alpha chain family. In plastids the minimal PEP RNA polymerase catalytic core is composed of four subunits: alpha, beta, beta', and beta''. When a (nuclear-encoded) sigma factor is associated with the core the holoenzyme is formed, which can initiate transcription.

The protein localises to the plastid. The protein resides in the chloroplast. The catalysed reaction is RNA(n) + a ribonucleoside 5'-triphosphate = RNA(n+1) + diphosphate. In terms of biological role, DNA-dependent RNA polymerase catalyzes the transcription of DNA into RNA using the four ribonucleoside triphosphates as substrates. The polypeptide is DNA-directed RNA polymerase subunit alpha (Chaetosphaeridium globosum (Charophycean green alga)).